A 1006-amino-acid chain; its full sequence is Unconventional myosin-Id (1006 aa).

Position 2 is an N-acetylalanine (alanine 2). One can recognise a Myosin motor domain in the interval 9–695 (FGKADFVLMD…TLFTLEELRA (687 aa)). 102–109 (GESGAGKT) is an ATP binding site. A Phosphoserine modification is found at serine 200. Tyrosine 536 is modified (phosphotyrosine). Residues 572–594 (MIALVDNLASKEPYYVRCIKPND) form an actin-binding region. IQ domains lie at 699–719 (VRVVLFLQKVWRGTLARMRYK) and 721–741 (TKAALTIIRYYRRYKVKSYIH). Positions 812-1005 (GQRADLGLQR…RSGFILSVPG (194 aa)) constitute a TH1 domain.

The protein belongs to the TRAFAC class myosin-kinesin ATPase superfamily. Myosin family. In terms of assembly, interacts (via the two IQ motifs) with calmodulin. Binds an additional calmodulin chain via a third, C-terminal region. Interacts with F-actin. Detected in enterocytes at the intestinal brush border membrane. Detected at the tip of intestinal microvilli (at protein level).

The protein localises to the cytoplasm. The protein resides in the perikaryon. Its subcellular location is the cell projection. It is found in the dendrite. It localises to the early endosome. The protein localises to the cell cortex. The protein resides in the basolateral cell membrane. Functionally, unconventional myosin that functions as actin-based motor protein with ATPase activity. Plays a role in endosomal protein trafficking, and especially in the transfer of cargo proteins from early to recycling endosomes. Required for normal planar cell polarity in ciliated tracheal cells, for normal rotational polarity of cilia, and for coordinated, unidirectional ciliary movement in the trachea. Required for normal, polarized cilia organization in brain ependymal epithelial cells. The chain is Unconventional myosin-Id from Mus musculus (Mouse).